Here is a 149-residue protein sequence, read N- to C-terminus: Large ribosomal subunit protein bL9 (149 aa).

Belongs to the bacterial ribosomal protein bL9 family.

Its function is as follows. Binds to the 23S rRNA. The protein is Large ribosomal subunit protein bL9 of Xylella fastidiosa (strain M23).